The sequence spans 380 residues: Lipid-A-disaccharide synthase (380 aa).

This sequence belongs to the LpxB family.

It carries out the reaction a lipid X + a UDP-2-N,3-O-bis[(3R)-3-hydroxyacyl]-alpha-D-glucosamine = a lipid A disaccharide + UDP + H(+). Its pathway is bacterial outer membrane biogenesis; LPS lipid A biosynthesis. In terms of biological role, condensation of UDP-2,3-diacylglucosamine and 2,3-diacylglucosamine-1-phosphate to form lipid A disaccharide, a precursor of lipid A, a phosphorylated glycolipid that anchors the lipopolysaccharide to the outer membrane of the cell. This Rickettsia typhi (strain ATCC VR-144 / Wilmington) protein is Lipid-A-disaccharide synthase.